Reading from the N-terminus, the 486-residue chain is Malonate-semialdehyde dehydrogenase (486 aa).

Residues Phe-154, Lys-178, Glu-181, Arg-182, and Ser-231 each contribute to the NAD(+) site. The Nucleophile role is filled by Cys-286. Residue Glu-386 participates in NAD(+) binding.

It belongs to the aldehyde dehydrogenase family. IolA subfamily. As to quaternary structure, homotetramer.

It carries out the reaction 3-oxopropanoate + NAD(+) + CoA + H2O = hydrogencarbonate + acetyl-CoA + NADH + H(+). It catalyses the reaction 2-methyl-3-oxopropanoate + NAD(+) + CoA + H2O = propanoyl-CoA + hydrogencarbonate + NADH + H(+). It participates in polyol metabolism; myo-inositol degradation into acetyl-CoA; acetyl-CoA from myo-inositol: step 7/7. In terms of biological role, catalyzes the oxidation of malonate semialdehyde (MSA) and methylmalonate semialdehyde (MMSA) into acetyl-CoA and propanoyl-CoA, respectively. Is involved in a myo-inositol catabolic pathway. Bicarbonate, and not CO2, is the end-product of the enzymatic reaction. This chain is Malonate-semialdehyde dehydrogenase, found in Bacillus cytotoxicus (strain DSM 22905 / CIP 110041 / 391-98 / NVH 391-98).